A 225-amino-acid chain; its full sequence is Phosphoribosyltransferase domain-containing protein 1 (225 aa).

A2 is modified (N-acetylalanine). The Mg(2+) site is built by E141 and D142. Residues E141–T149, K173, F194–V195, and D201 each bind GMP. Mg(2+) is bound at residue D201.

The protein belongs to the purine/pyrimidine phosphoribosyltransferase family. Homodimer.

Has low, barely detectable phosphoribosyltransferase activity (in vitro). Binds GMP, IMP and alpha-D-5-phosphoribosyl 1-pyrophosphate (PRPP). Is not expected to contribute to purine metabolism or GMP salvage. The polypeptide is Phosphoribosyltransferase domain-containing protein 1 (PRTFDC1) (Homo sapiens (Human)).